The chain runs to 161 residues: uncharacterized protein (161 aa).

This is an uncharacterized protein from Mycobacterium tuberculosis (strain CDC 1551 / Oshkosh).